Reading from the N-terminus, the 70-residue chain is MMFRVTSVGCLLLVIVFLNLVVPTSACRAEGTYCENDSQCCLNECCWGGCGHPCRHPGKRSKLQEFFRQR.

Positions M1 to A26 are cleaved as a signal peptide. Disulfide bonds link C27/C41, C34/C46, C40/C50, and C45/C54. 3 positions are modified to 4-carboxyglutamate: E30, E35, and E44. P53 is modified (4-hydroxyproline). Residue P57 is modified to Proline amide. The propeptide occupies S61–R70.

It belongs to the conotoxin I2 superfamily. In terms of tissue distribution, expressed by the venom duct.

Its subcellular location is the secreted. In terms of biological role, modulator of potassium channels, specifically up-modulates the calcium and voltage-gated BK channels, has no effect on single channel conductance, but increases the open probability of BK channels. The protein is Kappa-conotoxin-like Sx11.2 of Conus striolatus (Cone snail).